The chain runs to 629 residues: Probable indole-3-acetic acid-amido synthetase GH3.4 (629 aa).

This sequence belongs to the IAA-amido conjugating enzyme family. In terms of tissue distribution, expressed in flowers.

In terms of biological role, may catalyze the synthesis of indole-3-acetic acid (IAA)-amino acid conjugates, providing a mechanism for the plant to cope with the presence of excess auxin. The sequence is that of Probable indole-3-acetic acid-amido synthetase GH3.4 (GH3.4) from Oryza sativa subsp. japonica (Rice).